The following is a 221-amino-acid chain: Iron-sulfur cluster assembly SufBD family protein ycf24 (221 aa).

The protein belongs to the iron-sulfur cluster assembly SufBD family.

The protein localises to the plastid. The protein resides in the chloroplast. In Galdieria sulphuraria (Red alga), this protein is Iron-sulfur cluster assembly SufBD family protein ycf24 (ycf24).